Here is a 68-residue protein sequence, read N- to C-terminus: Large ribosomal subunit protein bL35 (68 aa).

It belongs to the bacterial ribosomal protein bL35 family.

In Persephonella marina (strain DSM 14350 / EX-H1), this protein is Large ribosomal subunit protein bL35.